Consider the following 5641-residue polypeptide: Cyclochlorotine synthetase (5641 aa).

Residues 95–124 are disordered; the sequence is PENLNGHLIGSTNGHKKQWENDSADDKRGQ. Residues 111–124 show a composition bias toward basic and acidic residues; it reads KQWENDSADDKRGQ. The interval 217 to 622 is adenylation (A) domain 1; sequence FTENVQRYPT…GRRDTQVKIR (406 aa). The region spanning 816–892 is the Carrier 1 domain; sequence TEEEYKIQTL…DLVSNCKMSA (77 aa). The interval 821–889 is thiolation (T) domain 1; sequence KIQTLKEIWS…QLSDLVSNCK (69 aa). O-(pantetheine 4'-phosphoryl)serine is present on Ser853. The tract at residues 926-1333 is condensation (C) domain 1; the sequence is EDVYPCTPLQ…AHVAEQIGQP (408 aa). The adenylation (A) domain 2 stretch occupies residues 1390 to 1768; that stretch reads DGNLTFEELN…ISRATTQIKI (379 aa). The 77-residue stretch at 1902-1978 folds into the Carrier 2 domain; it reads IELSEKQENM…QLVMIATELT (77 aa). The tract at residues 1907–1975 is thiolation (T) domain 2; that stretch reads KQENMARLWA…RFDQLVMIAT (69 aa). An O-(pantetheine 4'-phosphoryl)serine modification is found at Ser1939. The interval 2022–2438 is condensation (C) domain 2; sequence DIYACTPFQE…DLASEQDLAK (417 aa). Residues 2459 to 2859 are adenylation (A) domain 3; that stretch reads AEKARQHPNK…GRADTQVKLR (401 aa). The Carrier 3 domain occupies 2976–3052; that stretch reads GPLTEMETTL…GMAIKIQPIH (77 aa). The thiolation (T) domain 3 stretch occupies residues 2977–3049; the sequence is PLTEMETTLA…NLAGMAIKIQ (73 aa). Ser3013 carries the O-(pantetheine 4'-phosphoryl)serine modification. The tract at residues 3089-3482 is condensation (C) domain 3; the sequence is DIYPCTPLQV…LETVLSAFST (394 aa). The segment at 3523 to 3873 is adenylation (A) domain 4; sequence VQRAPDKVAI…IARKDLQVKL (351 aa). In terms of domain architecture, Carrier 4 spans 4005–4081; sequence IPSTPTEMKM…ELATKIAPRI (77 aa). The segment at 4010–4078 is thiolation (T) domain 4; it reads TEMKMQQLWA…RLSELATKIA (69 aa). At Ser4042 the chain carries O-(pantetheine 4'-phosphoryl)serine. The segment at 4123-4549 is condensation (C) domain 4; that stretch reads KDVYPCTPLQ…QSLDSLSQQD (427 aa). The adenylation (A) domain 5 stretch occupies residues 4574–4982; the sequence is QEIAGRHPDA…GRIGTDIKLR (409 aa). Residues 5118-5194 enclose the Carrier 5 domain; it reads PPSTQEEKVI…SLAEKISWES (77 aa). A thiolation (T) domain 5 region spans residues 5123-5191; it reads EEKVIAALWA…KLASLAEKIS (69 aa). Ser5155 carries the O-(pantetheine 4'-phosphoryl)serine modification. The interval 5260–5556 is condensation (C) domain 5; it reads AYLDIGPDVQ…DKCTTCVSGS (297 aa).

It belongs to the NRP synthetase family.

It participates in mycotoxin biosynthesis. Its function is as follows. Nonribosomal peptide synthetase; part of the gene cluster that mediates the biosynthesis of the mycotoxin cyclochlorotine, a hepatotoxic and carcinogenic cyclic chlorinated pentapeptide. Within the pathway, The NRPS cctN initially catalyzes the condensation of L-serine (Ser), Pro, L-2-aminobutyrate (2Abu), Ser, and beta-Phe in this order. During the chain elongation, side-chain hydroxy group of Ser4 would be used as a nucleophile, giving isocyclotine as a product of terminal condensation-like (CT) domain-catalyzed cyclization. After the dichlorination of Pro2 catalyzed by cctP2 to produce isocyclochlorotine, the cctO-mediated transacylation of isocyclochlorotine can furnish cyclochlorotine. The subsequent hydroxylation of cyclochlorotine by cctR yields hydroxycyclochlorotine as the final product. CctP1 probably acts as a phenylalanine aminomutase and provides the uncommon building block beta-Phe. Furthermore, 2Abu can be synthesized from threonine by one of the threonine dehydratases and transaminases localized outside of the cluster. The functions of the remaining proteins encoded by the cluster, cctM and cctT, have not been identified yet. This Talaromyces islandicus (Penicillium islandicum) protein is Cyclochlorotine synthetase.